The following is a 77-amino-acid chain: Acyl carrier protein (77 aa).

The 76-residue stretch at 1–76 (MATFDDVKAV…DVVNYIDNLK (76 aa)) folds into the Carrier domain. O-(pantetheine 4'-phosphoryl)serine is present on serine 36.

It belongs to the acyl carrier protein (ACP) family. In terms of processing, 4'-phosphopantetheine is transferred from CoA to a specific serine of apo-ACP by AcpS. This modification is essential for activity because fatty acids are bound in thioester linkage to the sulfhydryl of the prosthetic group.

Its subcellular location is the cytoplasm. It participates in lipid metabolism; fatty acid biosynthesis. Its function is as follows. Carrier of the growing fatty acid chain in fatty acid biosynthesis. This Campylobacter jejuni (strain RM1221) protein is Acyl carrier protein.